Consider the following 515-residue polypeptide: U3 small nucleolar RNA-associated protein 15 homolog (515 aa).

WD repeat units lie at residues 36–75, 78–117, 120–159, 162–202, 204–242, 246–285, and 287–326; these read KEFG…PIKT, RFKD…ALRQ, GHSK…EITS, EHTD…SVMS, DHGQ…QLLV, NHHK…VVHS, and DYAA…RKQL.

As to quaternary structure, part of the small subunit (SSU) processome, composed of more than 70 proteins and the RNA chaperone small nucleolar RNA (snoRNA) U3. May be a component of the proposed t-UTP subcomplex of the ribosomal small subunit (SSU) processome.

It localises to the nucleus. The protein localises to the nucleolus. Functionally, ribosome biogenesis factor. Involved in nucleolar processing of pre-18S ribosomal RNA. Required for optimal pre-ribosomal RNA transcription by RNA polymerase I. Part of the small subunit (SSU) processome, first precursor of the small eukaryotic ribosomal subunit. During the assembly of the SSU processome in the nucleolus, many ribosome biogenesis factors, an RNA chaperone and ribosomal proteins associate with the nascent pre-rRNA and work in concert to generate RNA folding, modifications, rearrangements and cleavage as well as targeted degradation of pre-ribosomal RNA by the RNA exosome. The sequence is that of U3 small nucleolar RNA-associated protein 15 homolog (utp15) from Xenopus tropicalis (Western clawed frog).